We begin with the raw amino-acid sequence, 224 residues long: Abasic site processing protein YoqW (224 aa).

The active-site Nucleophile is C2. A Thiazolidine linkage to a ring-opened DNA abasic site modification is found at C2. E106 is an active-site residue.

This sequence belongs to the SOS response-associated peptidase family.

Its activity is regulated as follows. Formation and reversal of DNA-protein cross-link depends on DNA context. Catalyzes formation of the thiazolidine linkage in presence of abasic sites in single-stranded DNA. Mediates the reversal of the thiazolidine cross-link in presence of double stranded DNA. Its function is as follows. Sensor of abasic sites in single-stranded DNA (ssDNA) required to preserve genome integrity by promoting error-free repair of abasic sites. Recognizes and binds abasic sites in ssDNA at replication forks and chemically modifies the lesion by forming a covalent cross-link with DNA: forms a stable thiazolidine linkage between a ring-opened abasic site and the alpha-amino and sulfhydryl substituents of its N-terminal catalytic cysteine residue. The DNA-protein cross-link is then reversed: able to catalyze the reversal of the thiazolidine cross-link and cycle between a cross-link and a non-cross-linked state depending on DNA context: mediates self-reversal of the thiazolidine cross-link in double stranded DNA. May act as a protease: mediates autocatalytic processing of its N-terminal methionine in order to expose the catalytic cysteine. In Bacillus subtilis (strain 168), this protein is Abasic site processing protein YoqW (yoqW).